The following is a 25-amino-acid chain: Caerin-1.5 (25 aa).

Leu-25 is subject to Leucine amide.

As to expression, expressed by the skin parotoid and/or rostral glands.

It is found in the secreted. In terms of biological role, antibacterial peptide, that adopts an alpha helical conformation which can disrupt bacterial membranes. Each caerin displays a different antimicrobial specificity. This is Caerin-1.5 from Ranoidea caerulea (Green tree frog).